The chain runs to 351 residues: dTDP-glucose 4,6-dehydratase (351 aa).

Residues 12-13 (FI), 32-35 (DALT), 58-59 (DI), 80-84 (FAAES), and Thr99 each bind NAD(+). Substrate is bound at residue Ser84. Thr133 serves as a coordination point for substrate. Asp134 serves as the catalytic Proton donor. Residues Glu135 and Tyr158 each act as proton acceptor in the active site. 158 to 162 (YSASK) is an NAD(+) binding site. Substrate is bound at residue Asn187. Asn188 contacts NAD(+). Substrate-binding positions include 197-198 (KL), 213-215 (PVY), Arg222, Asn257, and 289-293 (DRPGH).

It belongs to the NAD(P)-dependent epimerase/dehydratase family. dTDP-glucose dehydratase subfamily. As to quaternary structure, homodimer. Requires NAD(+) as cofactor.

The catalysed reaction is dTDP-alpha-D-glucose = dTDP-4-dehydro-6-deoxy-alpha-D-glucose + H2O. It functions in the pathway carbohydrate biosynthesis; dTDP-L-rhamnose biosynthesis. The protein operates within bacterial outer membrane biogenesis; LPS O-antigen biosynthesis. Catalyzes the dehydration of dTDP-D-glucose to form dTDP-6-deoxy-D-xylo-4-hexulose via a three-step process involving oxidation, dehydration and reduction. The polypeptide is dTDP-glucose 4,6-dehydratase (rfbB) (Xanthomonas campestris pv. campestris (strain ATCC 33913 / DSM 3586 / NCPPB 528 / LMG 568 / P 25)).